The chain runs to 328 residues: MSAGGEHLKDEGTRRQVVLAGGIAGLISRFCIAPLDVVKIRLQLQIHSLSDPTSHAHITGPVYKGTLSTIKTILREEGLTGLWKGNIPAELLYVCYGGIQFTTYRTTTQLLAQLDPHRLPQPIESFISGALGGGIATAATYPLDLLRTRFAAQGSGDNRVYESLFASLRDIAKTEGTVGFFRGCSAAVGQIVPYMGLFFATYEALRPVMATAPELSPIPLPPGSGDAAAGIVASVLAKTGVFPLDLVRKRLQVQGPTRALYVHRNIPEYRGVFNTMGLIFRTQGLRGLYRGLTVSLVKAAPASAVTMWTYERALKLLREHEIAAGRDE.

Solcar repeat units follow at residues 12–110 (GTRR…TTQL), 120–208 (PQPI…LRPV), and 221–316 (PPGS…ALKL). 6 consecutive transmembrane segments (helical) span residues 17-37 (VVLAGGIAGLISRFCIAPLDV), 79-99 (LTGLWKGNIPAELLYVCYGGI), 126-146 (FISGALGGGIATAATYPLDLL), 185-205 (SAAVGQIVPYMGLFFATYEAL), 227-247 (AAAGIVASVLAKTGVFPLDLV), and 291-308 (GLTVSLVKAAPASAVTMW).

The protein belongs to the mitochondrial carrier (TC 2.A.29) family.

The protein resides in the mitochondrion inner membrane. Its function is as follows. Mitochondrial transporter that mediates uptake of thiamine pyrophosphate (ThPP) into mitochondria. The protein is Mitochondrial thiamine pyrophosphate carrier 1 (tpc1) of Emericella nidulans (strain FGSC A4 / ATCC 38163 / CBS 112.46 / NRRL 194 / M139) (Aspergillus nidulans).